The chain runs to 586 residues: Arginine--tRNA ligase (586 aa).

A 'HIGH' region motif is present at residues 130–140; that stretch reads ANPTGPMHVGH.

The protein belongs to the class-I aminoacyl-tRNA synthetase family. Monomer.

It is found in the cytoplasm. It carries out the reaction tRNA(Arg) + L-arginine + ATP = L-arginyl-tRNA(Arg) + AMP + diphosphate. This Methylobacterium sp. (strain 4-46) protein is Arginine--tRNA ligase.